The following is a 359-amino-acid chain: Phospho-N-acetylmuramoyl-pentapeptide-transferase (359 aa).

10 helical membrane passes run 26 to 46, 75 to 95, 97 to 117, 134 to 154, 166 to 186, 197 to 217, 233 to 253, 261 to 281, 286 to 306, and 336 to 356; these read TIYAAITALIICFLLGPWLIR, GGVLIIFAVVVSTLLWANLTI, YVWLVLMVTLGYGLIGFADDY, LACEVCIALLVSVVLYAKPGF, VLPDLGWGYIFLSTFIIVGAA, GLAIGPAITCFMTYLLFAYFA, GVGELSIFCGAIVGAGIGFLW, VFMGDTGSLSLGGALGCLAIV, ILLAIVGGIFVLETFSVIFQV, and KVIVRFWIISILLALLAISTL.

The protein belongs to the glycosyltransferase 4 family. MraY subfamily. Mg(2+) serves as cofactor.

It is found in the cell inner membrane. It catalyses the reaction UDP-N-acetyl-alpha-D-muramoyl-L-alanyl-gamma-D-glutamyl-meso-2,6-diaminopimeloyl-D-alanyl-D-alanine + di-trans,octa-cis-undecaprenyl phosphate = di-trans,octa-cis-undecaprenyl diphospho-N-acetyl-alpha-D-muramoyl-L-alanyl-D-glutamyl-meso-2,6-diaminopimeloyl-D-alanyl-D-alanine + UMP. The protein operates within cell wall biogenesis; peptidoglycan biosynthesis. Its function is as follows. Catalyzes the initial step of the lipid cycle reactions in the biosynthesis of the cell wall peptidoglycan: transfers peptidoglycan precursor phospho-MurNAc-pentapeptide from UDP-MurNAc-pentapeptide onto the lipid carrier undecaprenyl phosphate, yielding undecaprenyl-pyrophosphoryl-MurNAc-pentapeptide, known as lipid I. The protein is Phospho-N-acetylmuramoyl-pentapeptide-transferase of Syntrophus aciditrophicus (strain SB).